The sequence spans 205 residues: Probable inactive peroxygenase-like protein (205 aa).

The Proline-knot motif lies at 79–88 (PVQLFGYILP). Position 183 is a phosphoserine (Ser183).

The protein belongs to the caleosin family.

It localises to the lipid droplet. The protein is Probable inactive peroxygenase-like protein of Arabidopsis thaliana (Mouse-ear cress).